The primary structure comprises 160 residues: MKQKYSKKSKKWIYITTIIFILILDISSKRLIIKYIKTYDTKKIFSVLNFFHVHNHGAAFSFLSDQNGWQKWFLSTVSMLTILVMTRIITKLKKQETKKITAYSLIIAGATGNLIDRIFYGFVVDFIDIHINDWHFATFNIADCSIFIGIIILMRINYST.

3 consecutive transmembrane segments (helical) span residues 13 to 33, 72 to 92, and 104 to 124; these read IYIT…RLII, WFLS…ITKL, and SLII…GFVV. Catalysis depends on residues aspartate 125 and aspartate 143. The chain crosses the membrane as a helical span at residues 134-154; the sequence is WHFATFNIADCSIFIGIIILM.

This sequence belongs to the peptidase A8 family.

The protein localises to the cell inner membrane. The catalysed reaction is Release of signal peptides from bacterial membrane prolipoproteins. Hydrolyzes -Xaa-Yaa-Zaa-|-(S,diacylglyceryl)Cys-, in which Xaa is hydrophobic (preferably Leu), and Yaa (Ala or Ser) and Zaa (Gly or Ala) have small, neutral side chains.. The protein operates within protein modification; lipoprotein biosynthesis (signal peptide cleavage). In terms of biological role, this protein specifically catalyzes the removal of signal peptides from prolipoproteins. The chain is Lipoprotein signal peptidase from Buchnera aphidicola subsp. Acyrthosiphon pisum (strain 5A).